Here is a 531-residue protein sequence, read N- to C-terminus: Poly(A)-specific ribonuclease PNLDC1 (531 aa).

The Mg(2+) site is built by Asp-28, Glu-30, Asp-271, and Asp-365. A helical transmembrane segment spans residues 506 to 526 (ITCLLQVCSIVTTWAMIAFLL).

This sequence belongs to the CAF1 family. It depends on Mg(2+) as a cofactor. Specifically expressed in embryonic stem cells. Highly expressed in testis.

It is found in the endoplasmic reticulum membrane. The enzyme catalyses Exonucleolytic cleavage of poly(A) to 5'-AMP.. 3'-exoribonuclease that has a preference for poly(A) tails of mRNAs, thereby efficiently degrading poly(A) tails. Exonucleolytic degradation of the poly(A) tail is often the first step in the decay of eukaryotic mRNAs and is also used to silence certain maternal mRNAs translationally during oocyte maturation and early embryonic development. May act as a regulator of multipotency in embryonic stem cells. Is a critical factor for proper spermatogenesis, involved in pre-piRNAs processing to generate mature piRNAs. This Mus musculus (Mouse) protein is Poly(A)-specific ribonuclease PNLDC1.